Reading from the N-terminus, the 59-residue chain is Large ribosomal subunit protein bL32 (59 aa).

The tract at residues 1 to 23 is disordered; it reads MAVQQNKKSPSKRGMHRSHDFLT.

It belongs to the bacterial ribosomal protein bL32 family.

The sequence is that of Large ribosomal subunit protein bL32 from Burkholderia multivorans (strain ATCC 17616 / 249).